Consider the following 338-residue polypeptide: RNA 3'-terminal phosphate cyclase (338 aa).

ATP-binding positions include Q103 and 283–287 (YLADQ). The active-site Tele-AMP-histidine intermediate is the H308.

The protein belongs to the RNA 3'-terminal cyclase family. Type 1 subfamily.

It localises to the cytoplasm. It catalyses the reaction a 3'-end 3'-phospho-ribonucleotide-RNA + ATP = a 3'-end 2',3'-cyclophospho-ribonucleotide-RNA + AMP + diphosphate. Its function is as follows. Catalyzes the conversion of 3'-phosphate to a 2',3'-cyclic phosphodiester at the end of RNA. The mechanism of action of the enzyme occurs in 3 steps: (A) adenylation of the enzyme by ATP; (B) transfer of adenylate to an RNA-N3'P to produce RNA-N3'PP5'A; (C) and attack of the adjacent 2'-hydroxyl on the 3'-phosphorus in the diester linkage to produce the cyclic end product. The biological role of this enzyme is unknown but it is likely to function in some aspects of cellular RNA processing. The chain is RNA 3'-terminal phosphate cyclase from Shigella boydii serotype 18 (strain CDC 3083-94 / BS512).